The chain runs to 85 residues: Large ribosomal subunit protein bL27 (85 aa).

This sequence belongs to the bacterial ribosomal protein bL27 family.

This Xylella fastidiosa (strain Temecula1 / ATCC 700964) protein is Large ribosomal subunit protein bL27.